The sequence spans 304 residues: Probable aquaporin NIP5-1 (304 aa).

2 consecutive transmembrane segments (helical) span residues 80-100 (LGAE…GPIV) and 106-126 (GAET…IIIL). The short motif at 137–139 (NPS) is the NPA 1 element. 3 consecutive transmembrane segments (helical) span residues 157-177 (AYIA…KGVF), 195-215 (AFAL…AVAT), and 219-239 (AVGE…ILVA). An NPA 2 motif is present at residues 248 to 250 (NPV). The helical transmembrane segment at 266–286 (WVYLVAPTLGAISGAAVYTGV) threads the bilayer. Serine 301 bears the Phosphoserine mark.

The protein belongs to the MIP/aquaporin (TC 1.A.8) family. NIP (TC 1.A.8.12) subfamily. In terms of tissue distribution, expressed in rosette leaves.

The protein resides in the cell membrane. Boric acid transporter. Low water transport activity. Plays an important role as plasma membrane boric acid channel for the boron uptake required for plant growth and development under boron limitation. This is Probable aquaporin NIP5-1 (NIP5-1) from Arabidopsis thaliana (Mouse-ear cress).